Here is a 25-residue protein sequence, read N- to C-terminus: Antimicrobial peptide 3 (25 aa).

As to expression, skin.

The protein resides in the secreted. In terms of biological role, has antibacterial activity against Gram-positive bacterium S.aureus and Gram-negative bacterium E.coli, when in combination with XT1 and XT6. This chain is Antimicrobial peptide 3, found in Xenopus tropicalis (Western clawed frog).